The sequence spans 428 residues: Elongation factor 1-alpha (428 aa).

The region spanning 5 to 225 (KPILNVAFIG…DAFQPPEKPT (221 aa)) is the tr-type G domain. The G1 stretch occupies residues 14–21 (GHVDAGKS). 14–21 (GHVDAGKS) contributes to the GTP binding site. Position 21 (serine 21) interacts with Mg(2+). The G2 stretch occupies residues 70–74 (GVTID). The tract at residues 91-94 (DCPG) is G3. GTP-binding positions include 91 to 95 (DCPGH) and 149 to 152 (NKMD). Residues 149–152 (NKMD) are G4. A G5 region spans residues 189 to 191 (ASL).

Belongs to the TRAFAC class translation factor GTPase superfamily. Classic translation factor GTPase family. EF-Tu/EF-1A subfamily.

Its subcellular location is the cytoplasm. The enzyme catalyses GTP + H2O = GDP + phosphate + H(+). Functionally, GTP hydrolase that promotes the GTP-dependent binding of aminoacyl-tRNA to the A-site of ribosomes during protein biosynthesis. This chain is Elongation factor 1-alpha, found in Methanococcus maripaludis (strain C6 / ATCC BAA-1332).